The sequence spans 423 residues: Ribosome biogenesis protein WDR12 homolog (423 aa).

The interval 10–93 (VQVHLKTKQE…EDAIEIEYVE (84 aa)) is ubiquitin-like (UBL) domain. WD repeat units lie at residues 105–142 (LHDD…ILTI), 144–186 (GHTA…NAVE), 193–232 (GHER…AGGD), 253–291 (GHRE…IKTE), 293–332 (STNK…GSIV), 338–378 (GHNA…APLY), and 382–420 (GHGE…VETM).

The protein belongs to the WD repeat WDR12/YTM1 family.

It is found in the nucleus. Its subcellular location is the nucleolus. The protein localises to the nucleoplasm. In terms of biological role, required for maturation of ribosomal RNAs and formation of the large ribosomal subunit. The sequence is that of Ribosome biogenesis protein WDR12 homolog from Drosophila willistoni (Fruit fly).